A 176-amino-acid polypeptide reads, in one-letter code: Putative metal-dependent hydrolase BLi00869/BLi00870/BL03027 (176 aa).

Positions 65, 158, and 162 each coordinate Zn(2+).

It belongs to the metal hydrolase YfiT family. In terms of assembly, homodimer. Requires Zn(2+) as cofactor.

It localises to the cytoplasm. Its function is as follows. Possible metal-dependent hydrolase. This Bacillus licheniformis (strain ATCC 14580 / DSM 13 / JCM 2505 / CCUG 7422 / NBRC 12200 / NCIMB 9375 / NCTC 10341 / NRRL NRS-1264 / Gibson 46) protein is Putative metal-dependent hydrolase BLi00869/BLi00870/BL03027.